The sequence spans 240 residues: Protein GrpE (240 aa).

Residues methionine 1–glutamine 13 show a composition bias toward polar residues. Residues methionine 1–tryptophan 89 form a disordered region. Positions alanine 20–alanine 38 are enriched in low complexity. Residues glutamate 65–tryptophan 89 show a composition bias toward basic and acidic residues.

It belongs to the GrpE family. In terms of assembly, homodimer.

It is found in the cytoplasm. In terms of biological role, participates actively in the response to hyperosmotic and heat shock by preventing the aggregation of stress-denatured proteins, in association with DnaK and GrpE. It is the nucleotide exchange factor for DnaK and may function as a thermosensor. Unfolded proteins bind initially to DnaJ; upon interaction with the DnaJ-bound protein, DnaK hydrolyzes its bound ATP, resulting in the formation of a stable complex. GrpE releases ADP from DnaK; ATP binding to DnaK triggers the release of the substrate protein, thus completing the reaction cycle. Several rounds of ATP-dependent interactions between DnaJ, DnaK and GrpE are required for fully efficient folding. The polypeptide is Protein GrpE (Halorhodospira halophila (strain DSM 244 / SL1) (Ectothiorhodospira halophila (strain DSM 244 / SL1))).